A 96-amino-acid polypeptide reads, in one-letter code: HssA/B-like protein 25 (96 aa).

The protein belongs to the hssA/B family.

The chain is HssA/B-like protein 25 (hssl25) from Dictyostelium discoideum (Social amoeba).